We begin with the raw amino-acid sequence, 656 residues long: Pyoverdine export ATP-binding/permease protein PvdT (656 aa).

The 240-residue stretch at 6–245 folds into the ABC transporter domain; the sequence is IDLRGIRKSY…SANPAALQAV (240 aa). ATP is bound at residue 43–50; that stretch reads GASGSGKS. 4 helical membrane passes run 284-304, 538-558, 589-609, and 619-639; these read ALTLLGIVIGVASVVVMLAVG, IAAISLLVGGIGVMNIMLMTV, LSVVGGLAGIVLALAMGAALL, and LSAVIGAFACALVTGVIFGFM.

The protein belongs to the ABC transporter superfamily. Macrolide exporter (TC 3.A.1.122) family. In terms of assembly, part of the tripartite efflux system PvdRT-OpmQ, which is composed of an inner membrane component with both ATPase and permease domains, PvdT, a periplasmic membrane fusion protein, PvdR, and an outer membrane component, OpmQ.

The protein localises to the cell inner membrane. In terms of biological role, part of the tripartite efflux system PvdRT-OpmQ required for the secretion into the extracellular milieu of the siderophore pyoverdine (PVD), which is involved in iron acquisition. This subunit binds PVD and drives its secretion by hydrolyzing ATP. The system is responsible for export of newly synthesized PVD after the final steps of biosynthesis have taken place in the periplasm. It is also responsible for recycling of PVD after internalization of ferri-PVD into the periplasm by the outer-membrane receptor FpvA and release of iron from PVD, thus making PVD available for new cycles of iron uptake. The polypeptide is Pyoverdine export ATP-binding/permease protein PvdT (Pseudomonas syringae pv. tomato (strain ATCC BAA-871 / DC3000)).